The chain runs to 569 residues: BICD family-like cargo adapter 1 (569 aa).

The disordered stretch occupies residues 1–36 (MSASCLDLISAPPQPDSDRMDRALNPGRQNSPDTAG). Residues 97–101 (AAKLG) carry the CC1 box motif. Residues 102–283 (KALLERNQDL…TLELEKHCHH (182 aa)) adopt a coiled-coil conformation. The disordered stretch occupies residues 385 to 405 (ALSTDSSMDESSETLSAKDVP). Residues 458-520 (NEQLQSAIRD…LEAWQDDMHR (63 aa)) adopt a coiled-coil conformation. The segment at 533-554 (EWKDPPFSFSRRGAAASRPTQR) is disordered.

This sequence belongs to the BICDR family. In terms of assembly, part of a tripartite complex with dynein and dynactin, acts an adapter linking the dynein motor complex and dynactin. In terms of tissue distribution, highly expressed in developing neural tissues and developing eye.

The protein localises to the cytoplasm. Its subcellular location is the cytoskeleton. It is found in the microtubule organizing center. It localises to the centrosome. Functionally, acts as an adapter protein linking the dynein motor complex to various cargos and converts dynein from a non-processive to a highly processive motor in the presence of dynactin. Facilitates the interaction between dynein and dynactin and activates dynein processivity (the ability to move along a microtubule for a long distance without falling off the track). Predominantly recruits 2 dyneins, which increases both the force and speed of the microtubule motor. Component of secretory vesicle machinery in developing neurons that acts as a regulator of neurite outgrowth. Regulates the secretory vesicle transport by controlling the accumulation of Rab6-containing secretory vesicles in the pericentrosomal region restricting anterograde secretory transport during the early phase of neuronal differentiation, thereby inhibiting neuritogenesis. The polypeptide is BICD family-like cargo adapter 1 (bicdl1) (Danio rerio (Zebrafish)).